The primary structure comprises 437 residues: MTVTVETLEKLERKITLTLPVGTIQSEVDSRLKKLARTVKMDGFRPGKVPMNVVAQRYGYSVHYEVMNDKVGEAFSQAANEAKLRVAGQPRITEKEESPEGQLAFDAVFEVFPEVKINDLSNAEVEKLSAEVGEDAIDKTLDILRKQRRTFAQRAQDAVAQDDDRVTVDFEGKIDGEPFPGGKAEDFQFIVGEGQMLKEFEDAVRGMKAGDSRTFPLSFPADYHGKDVAGKQADFMVTVKKIEASHLPEVNEQLAKSLGIAEATVEGLRADIKKNLEREVKFRLLARNKNAVMDTLVANAELDLPNASVQSEVNRMVEGARAELKQRGIKDADKAPIPDEVFRPQAERRVRLGLVVAELVRANNLQAKPEQIKAHIDELAASYEKPADVVRWYFSDNNRLAEVEAVVIENNVTDFVLGKAKVKEKSVSFDELMAQQG.

The region spanning 163-248 is the PPIase FKBP-type domain; it reads DDRVTVDFEG…VKKIEASHLP (86 aa).

It belongs to the FKBP-type PPIase family. Tig subfamily.

The protein resides in the cytoplasm. It catalyses the reaction [protein]-peptidylproline (omega=180) = [protein]-peptidylproline (omega=0). Its function is as follows. Involved in protein export. Acts as a chaperone by maintaining the newly synthesized protein in an open conformation. Functions as a peptidyl-prolyl cis-trans isomerase. This chain is Trigger factor, found in Variovorax paradoxus (strain S110).